We begin with the raw amino-acid sequence, 276 residues long: Putative metal-binding protein CT_415 (276 aa).

An N-terminal signal peptide occupies residues 1 to 18; the sequence is MRLLFLLLFSLGITCSYG. Residues H59, H121, H185, and D256 each contribute to the a divalent metal cation site.

The protein belongs to the bacterial solute-binding protein 9 family.

It is found in the periplasm. Its function is as follows. Part of an ATP-binding cassette (ABC) transport system involved in metal import. Binds a metal with high affinity and specificity and delivers it to the membrane permease for translocation into the cytoplasm. The sequence is that of Putative metal-binding protein CT_415 from Chlamydia trachomatis serovar D (strain ATCC VR-885 / DSM 19411 / UW-3/Cx).